The chain runs to 94 residues: PTS system galactitol-specific EIIB component (94 aa).

In terms of domain architecture, PTS EIIB type-2 spans 1 to 94 (MKRKIIVACG…QNKILTILQG (94 aa)). The Phosphocysteine intermediate; for EIIB activity role is filled by Cys9. Cys9 is modified (phosphocysteine; by EIIA).

In terms of assembly, forms a complex with one each of subunit of GatA, GatB and 2 subunits of GatC.

It is found in the cytoplasm. The enzyme catalyses galactitol(out) + N(pros)-phospho-L-histidyl-[protein] = galactitol 1-phosphate(in) + L-histidyl-[protein]. Functionally, the phosphoenolpyruvate-dependent sugar phosphotransferase system (PTS), a major carbohydrate active transport system, catalyzes the phosphorylation of incoming sugar substrates concomitant with their translocation across the cell membrane. The enzyme II complex composed of GatA, GatB and GatC is involved in galactitol transport. It can also use D-glucitol. The chain is PTS system galactitol-specific EIIB component from Escherichia coli (strain K12).